We begin with the raw amino-acid sequence, 304 residues long: Non-specific ribonucleoside hydrolase RihC (304 aa).

Histidine 233 is an active-site residue.

The protein belongs to the IUNH family. RihC subfamily.

In terms of biological role, hydrolyzes both purine and pyrimidine ribonucleosides with a broad-substrate specificity. The polypeptide is Non-specific ribonucleoside hydrolase RihC (Escherichia coli O8 (strain IAI1)).